The chain runs to 123 residues: UPF0102 protein Dole_2298 (123 aa).

It belongs to the UPF0102 family.

The polypeptide is UPF0102 protein Dole_2298 (Desulfosudis oleivorans (strain DSM 6200 / JCM 39069 / Hxd3) (Desulfococcus oleovorans)).